A 311-amino-acid polypeptide reads, in one-letter code: tRNA dimethylallyltransferase (311 aa).

9-16 (GPTAVGKT) is a binding site for ATP. 11 to 16 (TAVGKT) provides a ligand contact to substrate. Residues 34–37 (DSMQ) form an interaction with substrate tRNA region.

It belongs to the IPP transferase family. As to quaternary structure, monomer. Requires Mg(2+) as cofactor.

It catalyses the reaction adenosine(37) in tRNA + dimethylallyl diphosphate = N(6)-dimethylallyladenosine(37) in tRNA + diphosphate. Catalyzes the transfer of a dimethylallyl group onto the adenine at position 37 in tRNAs that read codons beginning with uridine, leading to the formation of N6-(dimethylallyl)adenosine (i(6)A). The polypeptide is tRNA dimethylallyltransferase (Clostridium botulinum (strain Okra / Type B1)).